We begin with the raw amino-acid sequence, 185 residues long: MIADIKKDAQERMGKCVDATKNQMAKVRTGRAHPSLLDSIQVSYYGTMTPLNQVANVGVEDARTLSVTVFDRSAIQAVEKAIMSSDLGLNPMSAGATLRIPLPALTEERRKDFIKVVRAEAEGGRVAIRNVRRDAISDVKKLEKAKECTEDDVRRFEDEVQKFTDAHIKKVDEILAAKEIELMEV.

It belongs to the RRF family.

The protein resides in the cytoplasm. In terms of biological role, responsible for the release of ribosomes from messenger RNA at the termination of protein biosynthesis. May increase the efficiency of translation by recycling ribosomes from one round of translation to another. The chain is Ribosome-recycling factor from Shewanella oneidensis (strain ATCC 700550 / JCM 31522 / CIP 106686 / LMG 19005 / NCIMB 14063 / MR-1).